A 428-amino-acid chain; its full sequence is C4-dicarboxylate transport protein (428 aa).

Transmembrane regions (helical) follow at residues 8–28 (SLYV…HFYP), 44–64 (LIKM…IAGM), 76–96 (VALL…LIIV), 142–162 (IGAF…LFGF), 184–204 (VIFG…FGAM), 222–242 (LIIC…GSIA), 289–309 (VVGL…SIYL), 326–346 (IFHQ…AAGV), and 352–372 (IVLA…LALI).

This sequence belongs to the dicarboxylate/amino acid:cation symporter (DAACS) (TC 2.A.23) family.

It is found in the cell inner membrane. Functionally, responsible for the transport of dicarboxylates such as succinate, fumarate, and malate from the periplasm across the membrane. This is C4-dicarboxylate transport protein from Klebsiella pneumoniae (strain 342).